A 447-amino-acid chain; its full sequence is Ribosomal protein uS12 methylthiotransferase RimO (447 aa).

One can recognise an MTTase N-terminal domain in the interval 4–114 (PKVGFVSLGC…VMEAVHEYVP (111 aa)). [4Fe-4S] cluster contacts are provided by Cys13, Cys49, Cys78, Cys147, Cys151, and Cys154. The 238-residue stretch at 133 to 370 (LTPKHYAYLK…MQVQQQISAA (238 aa)) folds into the Radical SAM core domain. One can recognise a TRAM domain in the interval 373-443 (QKRIGQTMTV…EYDLFAKLIK (71 aa)).

Belongs to the methylthiotransferase family. RimO subfamily. It depends on [4Fe-4S] cluster as a cofactor.

It localises to the cytoplasm. It carries out the reaction L-aspartate(89)-[ribosomal protein uS12]-hydrogen + (sulfur carrier)-SH + AH2 + 2 S-adenosyl-L-methionine = 3-methylsulfanyl-L-aspartate(89)-[ribosomal protein uS12]-hydrogen + (sulfur carrier)-H + 5'-deoxyadenosine + L-methionine + A + S-adenosyl-L-homocysteine + 2 H(+). Its function is as follows. Catalyzes the methylthiolation of an aspartic acid residue of ribosomal protein uS12. This is Ribosomal protein uS12 methylthiotransferase RimO from Acinetobacter baumannii (strain AB307-0294).